The sequence spans 235 residues: Transcriptional regulatory protein CseB (235 aa).

The Response regulatory domain occupies 6-119 (HVLFVEDDDV…VLVARIRAVL (114 aa)). The residue at position 55 (D55) is a 4-aspartylphosphate. Positions 141–235 (GGVLTFGELE…VRGFGYKLKA (95 aa)) form a DNA-binding region, ompR/PhoB-type.

Post-translationally, phosphorylated by CseC.

The protein resides in the cytoplasm. Functionally, member of the two-component regulatory system CseB/CseC involved in the stability of the cell envelope. CseB activates transcription of RNA polymerase sigma-E factor, in response to changes in the cell envelope. This Streptomyces avermitilis (strain ATCC 31267 / DSM 46492 / JCM 5070 / NBRC 14893 / NCIMB 12804 / NRRL 8165 / MA-4680) protein is Transcriptional regulatory protein CseB (cseB).